The following is a 185-amino-acid chain: Ribosome-recycling factor (185 aa).

Belongs to the RRF family.

The protein localises to the cytoplasm. Responsible for the release of ribosomes from messenger RNA at the termination of protein biosynthesis. May increase the efficiency of translation by recycling ribosomes from one round of translation to another. This chain is Ribosome-recycling factor, found in Geobacillus thermodenitrificans (strain NG80-2).